Consider the following 469-residue polypeptide: Cytoplasmic tRNA 2-thiolation protein 2 (469 aa).

Belongs to the CTU2/NCS2 family.

It is found in the cytoplasm. Its pathway is tRNA modification; 5-methoxycarbonylmethyl-2-thiouridine-tRNA biosynthesis. In terms of biological role, plays a central role in 2-thiolation of mcm(5)S(2)U at tRNA wobble positions of tRNA(Lys), tRNA(Glu) and tRNA(Gln). May act by forming a heterodimer with NCS6 that ligates sulfur from thiocarboxylated URM1 onto the uridine of tRNAs at wobble position. Prior mcm(5) tRNA modification by the elongator complex is required for 2-thiolation. May also be involved in protein urmylation. In Candida glabrata (strain ATCC 2001 / BCRC 20586 / JCM 3761 / NBRC 0622 / NRRL Y-65 / CBS 138) (Yeast), this protein is Cytoplasmic tRNA 2-thiolation protein 2.